The chain runs to 204 residues: Leucyl/phenylalanyl-tRNA--protein transferase (204 aa).

This sequence belongs to the L/F-transferase family.

The protein localises to the cytoplasm. It carries out the reaction N-terminal L-lysyl-[protein] + L-leucyl-tRNA(Leu) = N-terminal L-leucyl-L-lysyl-[protein] + tRNA(Leu) + H(+). The catalysed reaction is N-terminal L-arginyl-[protein] + L-leucyl-tRNA(Leu) = N-terminal L-leucyl-L-arginyl-[protein] + tRNA(Leu) + H(+). It catalyses the reaction L-phenylalanyl-tRNA(Phe) + an N-terminal L-alpha-aminoacyl-[protein] = an N-terminal L-phenylalanyl-L-alpha-aminoacyl-[protein] + tRNA(Phe). In terms of biological role, functions in the N-end rule pathway of protein degradation where it conjugates Leu, Phe and, less efficiently, Met from aminoacyl-tRNAs to the N-termini of proteins containing an N-terminal arginine or lysine. The sequence is that of Leucyl/phenylalanyl-tRNA--protein transferase from Rhizobium leguminosarum bv. trifolii (strain WSM2304).